A 157-amino-acid polypeptide reads, in one-letter code: Cyclic pyranopterin monophosphate synthase (157 aa).

Substrate-binding positions include 74 to 76 and 112 to 113; these read MCH and ME. Asp127 is a catalytic residue.

This sequence belongs to the MoaC family. As to quaternary structure, homohexamer; trimer of dimers.

It carries out the reaction (8S)-3',8-cyclo-7,8-dihydroguanosine 5'-triphosphate = cyclic pyranopterin phosphate + diphosphate. It functions in the pathway cofactor biosynthesis; molybdopterin biosynthesis. Catalyzes the conversion of (8S)-3',8-cyclo-7,8-dihydroguanosine 5'-triphosphate to cyclic pyranopterin monophosphate (cPMP). In Campylobacter jejuni subsp. jejuni serotype O:6 (strain 81116 / NCTC 11828), this protein is Cyclic pyranopterin monophosphate synthase.